Here is a 74-residue protein sequence, read N- to C-terminus: Kappa-scoloptoxin(03)-Ssm1a (74 aa).

A signal peptide spans 1–23; that stretch reads MNSSIAILLVMALIMFSLDKSYS. Cystine bridges form between C32–C59, C42–C58, and C45–C68.

Belongs to the scoloptoxin-03 family. In terms of tissue distribution, expressed by the venom gland.

The protein resides in the secreted. This toxin inhibits voltage-gated potassium channel currents in DRG neurons (IC(50)=44.2 nM). In vivo, insects injected with this toxin showed signs of neurotoxicity including twitching, paralysis, and body contraction. This Scolopendra mutilans (Chinese red-headed centipede) protein is Kappa-scoloptoxin(03)-Ssm1a.